Consider the following 245-residue polypeptide: 3-deoxy-manno-octulosonate cytidylyltransferase (245 aa).

The protein belongs to the KdsB family.

Its subcellular location is the cytoplasm. The enzyme catalyses 3-deoxy-alpha-D-manno-oct-2-ulosonate + CTP = CMP-3-deoxy-beta-D-manno-octulosonate + diphosphate. Its pathway is nucleotide-sugar biosynthesis; CMP-3-deoxy-D-manno-octulosonate biosynthesis; CMP-3-deoxy-D-manno-octulosonate from 3-deoxy-D-manno-octulosonate and CTP: step 1/1. It functions in the pathway bacterial outer membrane biogenesis; lipopolysaccharide biosynthesis. Activates KDO (a required 8-carbon sugar) for incorporation into bacterial lipopolysaccharide in Gram-negative bacteria. The chain is 3-deoxy-manno-octulosonate cytidylyltransferase from Acaryochloris marina (strain MBIC 11017).